A 205-amino-acid polypeptide reads, in one-letter code: MSSCFGSKKKPIYRKIVILGDGAAGKTSLLNVFTKGYFPQVYEPTIFENYIHDIFVDGNSIELSLWDTAGQEEYDQLRSLSYSDTHVIMICFAVDSRDSLENVITKWLPEVSSNCPGVKLVLVALKCDLRGADEEQVDHSKIIDYEEGLAAAKKINAVRYLECSAKLNRGVNEAFTEAARVALAAQPRGTKDGADESHGTGCIIA.

20-27 (GDGAAGKT) contributes to the GTP binding site. The Effector region signature appears at 42-50 (YEPTIFENY). GTP-binding positions include 67 to 71 (DTAGQ) and 125 to 128 (LKCD). Cysteine methyl ester is present on Cys202. Residue Cys202 is the site of S-geranylgeranyl cysteine attachment. The propeptide at 203 to 205 (IIA) is removed in mature form.

This sequence belongs to the small GTPase superfamily. Rho family. As to quaternary structure, interacts with for3. Post-translationally, palmitoylated by the erf2-erf4 complex.

The protein resides in the cell membrane. Functionally, involved in controlling cell shape and septation. Regulates cell separation by modulating the function of the exocyst complex. Involved in post-Golgi vesicle transport. Involved in driving sexual development in a palmitoylation-dependent manner. The protein is GTP-binding protein rho3 (rho3) of Schizosaccharomyces pombe (strain 972 / ATCC 24843) (Fission yeast).